We begin with the raw amino-acid sequence, 685 residues long: Polyphosphate kinase (685 aa).

Position 45 (Asn-45) interacts with ATP. Arg-375 and Arg-405 together coordinate Mg(2+). The Phosphohistidine intermediate role is filled by His-435. Tyr-468, Arg-564, and His-592 together coordinate ATP.

Belongs to the polyphosphate kinase 1 (PPK1) family. It depends on Mg(2+) as a cofactor. In terms of processing, an intermediate of this reaction is the autophosphorylated ppk in which a phosphate is covalently linked to a histidine residue through a N-P bond.

The catalysed reaction is [phosphate](n) + ATP = [phosphate](n+1) + ADP. Functionally, catalyzes the reversible transfer of the terminal phosphate of ATP to form a long-chain polyphosphate (polyP). The protein is Polyphosphate kinase of Neisseria gonorrhoeae (strain ATCC 700825 / FA 1090).